Here is a 949-residue protein sequence, read N- to C-terminus: Protocadherin alpha-11 (949 aa).

Positions 1–29 (MFGFQRRGLGTPRLQLWLLLLEFWEVGSG) are cleaved as a signal peptide. Cadherin domains lie at 30-133 (QLHY…PPVF), 157-242 (ASDA…DPDF), 243-349 (DKSE…SPEV), 350-454 (AVTS…APAF), 455-564 (AQPE…APAL), and 580-677 (VPRS…APKA). Topologically, residues 30–696 (QLHYSVSEEA…SPEAALVDVN (667 aa)) are extracellular. N-linked (GlcNAc...) asparagine glycans are attached at residues Asn-265 and Asn-304. Asn-547 carries an N-linked (GlcNAc...) asparagine glycan. The helical transmembrane segment at 697 to 717 (VYLIIAICVVSSLLVLTLLLY) threads the bilayer. Residues 718–949 (TALWCSATPT…GNSTTDNSDQ (232 aa)) are Cytoplasmic-facing. PXXP repeat units follow at residues 733 to 736 (PGKP) and 773 to 776 (PSLP). The interval 733 to 893 (PGKPTLVCSR…PDKFIIPGSP (161 aa)) is 6 X 4 AA repeats of P-X-X-P. Disordered regions lie at residues 753–807 (RRQR…DWRY), 826–858 (ILRA…PPVG), and 870–889 (YGPG…KFII). The segment covering 780–789 (NKEEEGERQE) has biased composition (basic and acidic residues). PXXP repeat units follow at residues 795 to 798 (PGQP), 831 to 834 (PGGP), 872 to 875 (PGNP), and 890 to 893 (PGSP). The segment at 900–949 (QEPANSQIDKSDFITFGKKEETKKKKKKKKGNKTQEKKEKGNSTTDNSDQ) is disordered. The span at 908-922 (DKSDFITFGKKEETK) shows a compositional bias: basic and acidic residues.

The protein resides in the cell membrane. Its function is as follows. Potential calcium-dependent cell-adhesion protein. May be involved in the establishment and maintenance of specific neuronal connections in the brain. This chain is Protocadherin alpha-11 (PCDHA11), found in Pan troglodytes (Chimpanzee).